Reading from the N-terminus, the 402-residue chain is Probable tRNA sulfurtransferase (402 aa).

The region spanning 61-166 (EEIMKRISKV…SDAAYLYSRV (106 aa)) is the THUMP domain. ATP contacts are provided by residues 184-185 (ML), 209-210 (HF), R266, G288, and Q297.

The protein belongs to the ThiI family.

The protein localises to the cytoplasm. The catalysed reaction is [ThiI sulfur-carrier protein]-S-sulfanyl-L-cysteine + a uridine in tRNA + 2 reduced [2Fe-2S]-[ferredoxin] + ATP + H(+) = [ThiI sulfur-carrier protein]-L-cysteine + a 4-thiouridine in tRNA + 2 oxidized [2Fe-2S]-[ferredoxin] + AMP + diphosphate. It carries out the reaction [ThiS sulfur-carrier protein]-C-terminal Gly-Gly-AMP + S-sulfanyl-L-cysteinyl-[cysteine desulfurase] + AH2 = [ThiS sulfur-carrier protein]-C-terminal-Gly-aminoethanethioate + L-cysteinyl-[cysteine desulfurase] + A + AMP + 2 H(+). The protein operates within cofactor biosynthesis; thiamine diphosphate biosynthesis. In terms of biological role, catalyzes the ATP-dependent transfer of a sulfur to tRNA to produce 4-thiouridine in position 8 of tRNAs, which functions as a near-UV photosensor. Also catalyzes the transfer of sulfur to the sulfur carrier protein ThiS, forming ThiS-thiocarboxylate. This is a step in the synthesis of thiazole, in the thiamine biosynthesis pathway. The sulfur is donated as persulfide by IscS. The chain is Probable tRNA sulfurtransferase from Macrococcus caseolyticus (strain JCSC5402) (Macrococcoides caseolyticum).